A 474-amino-acid polypeptide reads, in one-letter code: UDP-glycosyltransferase 71C2 (474 aa).

UDP-alpha-D-glucose contacts are provided by residues S293, 352–354 (APQ), 369–377 (HCGWNSILE), and 391–394 (YAEQ).

It belongs to the UDP-glycosyltransferase family.

Possesses low quercetin 3-O-glucosyltransferase, 7-O-glucosyltransferase and 3'-O-glucosyltransferase activities in vitro. Glucosylates other secondary metabolites in vitro like vanillin, trans-resveratrol, curumin and etoposide. This Arabidopsis thaliana (Mouse-ear cress) protein is UDP-glycosyltransferase 71C2 (UGT71C2).